The chain runs to 218 residues: Elongation factor Ts (218 aa).

Residues 82-85 form an involved in Mg(2+) ion dislocation from EF-Tu region; sequence TDFV.

The protein belongs to the EF-Ts family.

It localises to the cytoplasm. Its function is as follows. Associates with the EF-Tu.GDP complex and induces the exchange of GDP to GTP. It remains bound to the aminoacyl-tRNA.EF-Tu.GTP complex up to the GTP hydrolysis stage on the ribosome. This chain is Elongation factor Ts, found in Prochlorococcus marinus (strain AS9601).